Here is a 221-residue protein sequence, read N- to C-terminus: MSILTQEALLVRDALSVRGLENPLIELNINHKIRKRRIENHMRAIVHLLNLDLEHDSLLNTPKRIAKMYIEEIFSGLDYSNFPKIAIIQNTMQINEMITVRGINITSTCEHHFIVFNGKVTISYIPEKNVIGLSKINRIVQFFSKRPQLQERLTKQIFLALQTLLNTDNVAIFIDAVHYCVKARGIHDVSSTTTTTALGGLFESNTNTREEFLHAIMYCNH.

Zn(2+) contacts are provided by cysteine 109, histidine 112, and cysteine 180.

The protein belongs to the GTP cyclohydrolase I family. In terms of assembly, toroid-shaped homodecamer, composed of two pentamers of five dimers.

It carries out the reaction GTP + H2O = 7,8-dihydroneopterin 3'-triphosphate + formate + H(+). It functions in the pathway cofactor biosynthesis; 7,8-dihydroneopterin triphosphate biosynthesis; 7,8-dihydroneopterin triphosphate from GTP: step 1/1. The sequence is that of GTP cyclohydrolase 1 from Blochmanniella pennsylvanica (strain BPEN).